A 253-amino-acid polypeptide reads, in one-letter code: 5'/3'-nucleotidase SurE (253 aa).

4 residues coordinate a divalent metal cation: D8, D9, S39, and N92.

It belongs to the SurE nucleotidase family. A divalent metal cation serves as cofactor.

It localises to the cytoplasm. It catalyses the reaction a ribonucleoside 5'-phosphate + H2O = a ribonucleoside + phosphate. The catalysed reaction is a ribonucleoside 3'-phosphate + H2O = a ribonucleoside + phosphate. The enzyme catalyses [phosphate](n) + H2O = [phosphate](n-1) + phosphate + H(+). Its function is as follows. Nucleotidase with a broad substrate specificity as it can dephosphorylate various ribo- and deoxyribonucleoside 5'-monophosphates and ribonucleoside 3'-monophosphates with highest affinity to 3'-AMP. Also hydrolyzes polyphosphate (exopolyphosphatase activity) with the preference for short-chain-length substrates (P20-25). Might be involved in the regulation of dNTP and NTP pools, and in the turnover of 3'-mononucleotides produced by numerous intracellular RNases (T1, T2, and F) during the degradation of various RNAs. The sequence is that of 5'/3'-nucleotidase SurE from Erwinia tasmaniensis (strain DSM 17950 / CFBP 7177 / CIP 109463 / NCPPB 4357 / Et1/99).